A 340-amino-acid polypeptide reads, in one-letter code: Replication factor C subunit 2 (340 aa).

59–66 (GSPGTGKT) contacts ATP.

The protein belongs to the activator 1 small subunits family. As to quaternary structure, heteropentamer of subunits rfc1, rfc2, rfc3, rfc4 and rfc5 that forms a complex (RFC) with PCNA in the presence of ATP. Two other complexes exist where rfc1 can be replaced by either ctf18 or elg1 to form the ctf18-RFC or the elg1-RFC complexes respectively.

The protein localises to the nucleus. Functionally, the elongation of primed DNA templates by DNA polymerase delta and epsilon requires the action of the accessory proteins PCNA and activator 1. Subunit 2 binds ATP and single-stranded DNA. In Schizosaccharomyces pombe (strain 972 / ATCC 24843) (Fission yeast), this protein is Replication factor C subunit 2 (rfc2).